Consider the following 478-residue polypeptide: Transcript termination protein A18 (478 aa).

Residues 98–254 (KLSTHRPMYM…NDVVNVLKVS (157 aa)) enclose the Helicase ATP-binding domain. An ATP-binding site is contributed by 111-118 (LSCGFGKT). A DESH box motif is present at residues 204 to 207 (DESH). The region spanning 302–468 (PRNNLIVETV…GIEGTKEEPV (167 aa)) is the Helicase C-terminal domain.

This sequence belongs to the helicase family. Poxviruses subfamily. In terms of assembly, interacts with G2. Might be part of a transcription complex composed at least of G2, A18, and H5.

It localises to the virion. Functionally, DNA helicase which seems to act as a postreplicative transcription termination factor. Involved in ATP-dependent release of nascent RNA. Forms a stable complex with single-stranded DNA, and to a lesser extent RNA. This Rabbit fibroma virus (strain Kasza) (RFV) protein is Transcript termination protein A18.